The chain runs to 130 residues: Small ribosomal subunit protein uS9 (130 aa).

This sequence belongs to the universal ribosomal protein uS9 family.

The protein is Small ribosomal subunit protein uS9 of Salmonella paratyphi C (strain RKS4594).